The chain runs to 753 residues: Photosystem I P700 chlorophyll a apoprotein A1 (753 aa).

8 consecutive transmembrane segments (helical) span residues 72-95 (IFSAHFGHLAIIFVWLSGAYFHGA), 158-181 (LYCTAIGGLVMAALMMFAGWFHYH), 197-221 (MNHHLAGLLGLGCLSWAGHQIHVSL), 293-311 (TAHHHLALAVLFIVAGHMY), 350-373 (WHAQLAINLAMLGSLSIIVAHHMY), 389-415 (LSLFTHHMWIGGFLIVGAGAHGAIFMV), 437-459 (AIISHLNWVCIFLGFHSFGLYVH), and 534-552 (FMVHHIHAFTIHVTALILL). Cys-576 and Cys-585 together coordinate [4Fe-4S] cluster. A run of 2 helical transmembrane segments spans residues 592–613 (HVFLGLFWMYNSLSIVIFHFSW) and 667–689 (LSAYGLLFLGAHFIWAFSLMFLF). His-678 provides a ligand contact to chlorophyll a'. Chlorophyll a contacts are provided by Met-686 and Tyr-694. Trp-695 lines the phylloquinone pocket. A helical transmembrane segment spans residues 727–747 (AVGVAHYLLGGIVTTWAFFLA).

Belongs to the PsaA/PsaB family. In terms of assembly, the PsaA/B heterodimer binds the P700 chlorophyll special pair and subsequent electron acceptors. PSI consists of a core antenna complex that captures photons, and an electron transfer chain that converts photonic excitation into a charge separation. The cyanobacterial PSI reaction center is composed of one copy each of PsaA,B,C,D,E,F,I,J,K,L,M and X, and forms trimeric complexes. Requires PSI electron transfer chain: 5 chlorophyll a, 1 chlorophyll a', 2 phylloquinones and 3 4Fe-4S clusters. PSI core antenna: 90 chlorophyll a, 22 carotenoids, 3 phospholipids and 1 galactolipid. P700 is a chlorophyll a/chlorophyll a' dimer, A0 is one or more chlorophyll a, A1 is one or both phylloquinones and FX is a shared 4Fe-4S iron-sulfur center. as cofactor.

Its subcellular location is the cellular thylakoid membrane. The catalysed reaction is reduced [plastocyanin] + hnu + oxidized [2Fe-2S]-[ferredoxin] = oxidized [plastocyanin] + reduced [2Fe-2S]-[ferredoxin]. Functionally, psaA and PsaB bind P700, the primary electron donor of photosystem I (PSI), as well as the electron acceptors A0, A1 and FX. PSI is a plastocyanin/cytochrome c6-ferredoxin oxidoreductase, converting photonic excitation into a charge separation, which transfers an electron from the donor P700 chlorophyll pair to the spectroscopically characterized acceptors A0, A1, FX, FA and FB in turn. Oxidized P700 is reduced on the lumenal side of the thylakoid membrane by plastocyanin or cytochrome c6. This chain is Photosystem I P700 chlorophyll a apoprotein A1, found in Trichodesmium erythraeum (strain IMS101).